An 860-amino-acid chain; its full sequence is Valine--tRNA ligase (860 aa).

The 'HIGH' region signature appears at 43–53; the sequence is PTVSGALHVGH. Residues 469 to 491 are disordered; it reads LPVDPSSDAPTGYQESQRNQPGG. A 'KMSKS' region motif is present at residues 574 to 578; that stretch reads KMSKS. Residue Lys-577 participates in ATP binding.

Belongs to the class-I aminoacyl-tRNA synthetase family. ValS type 2 subfamily. In terms of assembly, monomer.

It localises to the cytoplasm. It catalyses the reaction tRNA(Val) + L-valine + ATP = L-valyl-tRNA(Val) + AMP + diphosphate. Functionally, catalyzes the attachment of valine to tRNA(Val). As ValRS can inadvertently accommodate and process structurally similar amino acids such as threonine, to avoid such errors, it has a 'posttransfer' editing activity that hydrolyzes mischarged Thr-tRNA(Val) in a tRNA-dependent manner. The chain is Valine--tRNA ligase from Salinispora tropica (strain ATCC BAA-916 / DSM 44818 / JCM 13857 / NBRC 105044 / CNB-440).